The sequence spans 589 residues: Pentalenolactone D synthase (589 aa).

FAD-binding positions include 60–61, 82–83, 90–91, 102–103, Tyr108, Val152, and Met491; these read IG, DE, TW, and DV.

This sequence belongs to the FAD-binding monooxygenase family. It depends on FAD as a cofactor.

The catalysed reaction is 1-deoxy-11-oxopentalenate + NADPH + O2 + H(+) = pentalenolactone D + NADP(+) + H2O. Its pathway is antibiotic biosynthesis; pentalenolactone biosynthesis. Catalyzes the flavin-dependent Baeyer-Villiger oxidation of 1-deoxy-11-oxopentalenic acid to pentalenolactone D in the biosynthesis of pentalenolactone antibiotic. In Streptomyces arenae, this protein is Pentalenolactone D synthase (pntE).